Consider the following 1586-residue polypeptide: Zinc finger protein GLI2 (1586 aa).

Polar residues predominate over residues 1 to 10; the sequence is METSASATAS. Positions 1-22 are disordered; it reads METSASATASEKQEAKSGILEA. V50 is covalently cross-linked (Glycyl lysine isopeptide (Lys-Gly) (interchain with G-Cter in SUMO2)). Phosphoserine is present on residues S149, S234, S236, and S242. Positions 342–367 are enriched in polar residues; it reads SSSSNCLSDTNQNKQSSESAVSSTVN. The segment at 342-389 is disordered; the sequence is SSSSNCLSDTNQNKQSSESAVSSTVNPVAIHKRSKVKTEPEGLRPASP. Residue S388 is modified to Phosphoserine; by DYRK2. The C2H2-type 1 zinc finger occupies 437 to 464; the sequence is TNCHWEDCTKEYDTQEQLVHHINNEHIH. The C2H2-type 2; degenerate zinc-finger motif lies at 475–497; it reads QACTREQKPFKAQYMLVVHMRRH. C2H2-type zinc fingers lie at residues 503-527, 533-558, and 564-589; these read HKCT…LRSH, YVCE…NRTH, and YICK…KTVH. Disordered regions lie at residues 577 to 636 and 650 to 716; these read DPSS…TSQA and SSGL…SAGG. Positions 589–605 are enriched in basic and acidic residues; the sequence is HGPDAHVTKKQRNDVHL. Positions 654–674 are enriched in low complexity; the sequence is CQSSPGAQSSCSSEPSPLGSA. T725 carries the post-translational modification Phosphothreonine. 5 disordered regions span residues 742–879, 925–1030, 1182–1215, 1421–1441, and 1469–1498; these read DSCS…SGLL, RTLP…RPPS, QYPG…PSQG, MGNM…GAPD, and MRSQ…QVSS. An N6-acetyllysine; by EP300 modification is found at K757. The segment covering 791–802 has biased composition (polar residues); the sequence is LSASEVTMLSQL. Low complexity-rich tracts occupy residues 809–824 and 947–961; these read STST…RRSS and GHGH…PHEA. The segment covering 968–977 has biased composition (basic and acidic residues); it reads RASDPVRRPD. A Phosphoserine; by DYRK2 modification is found at S1011. The segment covering 1469 to 1485 has biased composition (polar residues); it reads MRSQPPQPQACQDSIQP.

It belongs to the GLI C2H2-type zinc-finger protein family. Interaction with ZIC1 and ZIC2. Interacts with STK36. Interacts with SUFU; this inhibits transcriptional activation mediated by GLI2. Interacts (via C-terminal internal region) with FOXC1 (via N-terminus); this interaction is direct and increases GLI2 DNA-binding and transcriptional activity through a smoothened (SMO)-independent Hedgehog (Hh) signaling pathway. Post-translationally, phosphorylated in vitro by ULK3. Phosphorylated by DYRK2; this inhibits GLI2 transcription factor activity and promotes proteasomal degradation of GLI2. In terms of processing, acetylation at Lys-757 inhibits Hh target gene expression, probably by impeding entry into chromatin thus preventing promoter occupancy. Expressed in breast cancers (at protein level). Isoform 1 and isoform 4 are expressed in HTLV-1-infected T-cell lines (at protein level). Isoform 1 and isoform 2 are strongly expressed in HTLV-1-infected T-cell lines. Isoform 3 and isoform 4 are weakly expressed in HTLV-1-infected T-cell lines.

The protein resides in the nucleus. Its subcellular location is the cytoplasm. It localises to the cell projection. The protein localises to the cilium. In terms of biological role, functions as a transcription regulator in the hedgehog (Hh) pathway. Functions as a transcriptional activator. May also function as transcriptional repressor. Requires STK36 for full transcriptional activator activity. Required for normal embryonic development. Functionally, involved in the smoothened (SHH) signaling pathway. Acts as a transcriptional activator in T-cell leukemia virus type 1 (HTLV-1)-infected cells in a Tax-dependent manner. Binds to the DNA sequence 5'-GAACCACCCA-3' which is part of the Tax-responsive element (TRE-2S) regulatory element that augments the Tax-dependent enhancer of HTLV-1. Its function is as follows. (Microbial infection) Acts as a transcriptional activators in T-cell leukemia virus type 1 (HTLV-1)-infected cells in a Tax-dependent manner. Binds to the DNA sequence 5'-GAACCACCCA-3' which is part of the Tax-responsive element (TRE-2S) regulatory element that augments the Tax-dependent enhancer of HTLV-1. In terms of biological role, acts as a transcriptional repressor. This is Zinc finger protein GLI2 from Homo sapiens (Human).